An 89-amino-acid chain; its full sequence is Small ribosomal subunit protein uS19 (89 aa).

This sequence belongs to the universal ribosomal protein uS19 family.

Protein S19 forms a complex with S13 that binds strongly to the 16S ribosomal RNA. This is Small ribosomal subunit protein uS19 from Porphyromonas gingivalis (strain ATCC 33277 / DSM 20709 / CIP 103683 / JCM 12257 / NCTC 11834 / 2561).